The primary structure comprises 129 residues: Processing of GAS1 and ALP protein 2 (129 aa).

N-acetylserine is present on serine 2. Residues 23–42 (HFIRLVIIVGGYLLLRNIAS) traverse the membrane as a helical segment. A coiled-coil region spans residues 43–116 (RELAKKQLAA…EAKRRNQGLD (74 aa)). 2 disordered regions span residues 53-92 (QVEKDKRDKEEKRSKDLIDKPDDAATAETTSFGWGKKTRR) and 106-129 (EEAKRRNQGLDPDSDADIEELLEE). Basic and acidic residues predominate over residues 54-75 (VEKDKRDKEEKRSKDLIDKPDD). Over residues 117 to 129 (PDSDADIEELLEE) the composition is skewed to acidic residues. The residue at position 119 (serine 119) is a Phosphoserine.

The protein belongs to the PGA2 family.

The protein resides in the endoplasmic reticulum membrane. The protein localises to the nucleus membrane. Functionally, involved in the processing and trafficking of GAS1 and PHO8 glycosylated proteins. The polypeptide is Processing of GAS1 and ALP protein 2 (PGA2) (Saccharomyces cerevisiae (strain ATCC 204508 / S288c) (Baker's yeast)).